Here is a 401-residue protein sequence, read N- to C-terminus: 2,3,4,5-tetrahydropyridine-2,6-dicarboxylate N-succinyltransferase (401 aa).

Glu269 serves as the catalytic Acyl-anhydride intermediate. Residues Arg271, Gly286, Ser289, Ala312, 327-328 (DA), Gly335, and Lys364 each bind succinyl-CoA.

The protein belongs to the type 2 tetrahydrodipicolinate N-succinyltransferase family. In terms of assembly, homotrimer.

The protein localises to the cytoplasm. It carries out the reaction (S)-2,3,4,5-tetrahydrodipicolinate + succinyl-CoA + H2O = (S)-2-succinylamino-6-oxoheptanedioate + CoA. Its pathway is amino-acid biosynthesis; L-lysine biosynthesis via DAP pathway; LL-2,6-diaminopimelate from (S)-tetrahydrodipicolinate (succinylase route): step 1/3. Functionally, catalyzes the conversion of the cyclic tetrahydrodipicolinate (THDP) into the acyclic N-succinyl-L-2-amino-6-oxopimelate using succinyl-CoA. The chain is 2,3,4,5-tetrahydropyridine-2,6-dicarboxylate N-succinyltransferase from Helicobacter pylori (strain ATCC 700392 / 26695) (Campylobacter pylori).